The chain runs to 261 residues: Thiamine thiazole synthase (261 aa).

NAD(+)-binding positions include S33, 52-53, G60, V124, and 152-154; these read ER and HVD. Residues D154 and H169 each contribute to the Fe cation site. An NAD(+)-binding site is contributed by M219. R229 contacts glycine.

This sequence belongs to the THI4 family. In terms of assembly, homooctamer; tetramer of dimers. Fe(2+) serves as cofactor.

It carries out the reaction hydrogen sulfide + glycine + NAD(+) = ADP-5-ethyl-4-methylthiazole-2-carboxylate + nicotinamide + 3 H2O + H(+). It participates in cofactor biosynthesis; thiamine diphosphate biosynthesis. Involved in the biosynthesis of the thiazole moiety of thiamine. Catalyzes the conversion of NAD and glycine to adenosine diphosphate 5-(2-hydroxyethyl)-4-methylthiazole-2-carboxylate (ADT), an adenylated thiazole intermediate, using free sulfide as a source of sulfur. The chain is Thiamine thiazole synthase from Pyrobaculum arsenaticum (strain DSM 13514 / JCM 11321 / PZ6).